A 262-amino-acid chain; its full sequence is Sulfur carrier protein FdhD (262 aa).

Residue Cys105 is the Cysteine persulfide intermediate of the active site. A Mo-bis(molybdopterin guanine dinucleotide)-binding site is contributed by 246–251 (FVRKNR).

The protein belongs to the FdhD family.

Its subcellular location is the cytoplasm. In terms of biological role, required for formate dehydrogenase (FDH) activity. Acts as a sulfur carrier protein that transfers sulfur from IscS to the molybdenum cofactor prior to its insertion into FDH. This Picrophilus torridus (strain ATCC 700027 / DSM 9790 / JCM 10055 / NBRC 100828 / KAW 2/3) protein is Sulfur carrier protein FdhD.